Consider the following 185-residue polypeptide: V-type ATP synthase subunit E (185 aa).

The protein belongs to the V-ATPase E subunit family.

Functionally, produces ATP from ADP in the presence of a proton gradient across the membrane. The polypeptide is V-type ATP synthase subunit E (Deinococcus radiodurans (strain ATCC 13939 / DSM 20539 / JCM 16871 / CCUG 27074 / LMG 4051 / NBRC 15346 / NCIMB 9279 / VKM B-1422 / R1)).